A 345-amino-acid chain; its full sequence is S-adenosylmethionine:tRNA ribosyltransferase-isomerase (345 aa).

The protein belongs to the QueA family. In terms of assembly, monomer.

The protein localises to the cytoplasm. It catalyses the reaction 7-aminomethyl-7-carbaguanosine(34) in tRNA + S-adenosyl-L-methionine = epoxyqueuosine(34) in tRNA + adenine + L-methionine + 2 H(+). It functions in the pathway tRNA modification; tRNA-queuosine biosynthesis. Functionally, transfers and isomerizes the ribose moiety from AdoMet to the 7-aminomethyl group of 7-deazaguanine (preQ1-tRNA) to give epoxyqueuosine (oQ-tRNA). The polypeptide is S-adenosylmethionine:tRNA ribosyltransferase-isomerase (Acinetobacter baumannii (strain ATCC 17978 / DSM 105126 / CIP 53.77 / LMG 1025 / NCDC KC755 / 5377)).